The sequence spans 196 residues: RNA annealing protein YRA2 (196 aa).

Disordered regions lie at residues 1 to 63 (MSVD…PTHQ) and 143 to 196 (DSTR…MNGN). In terms of domain architecture, RRM spans 63–137 (QRVRFLNIPL…AKITVEIFEQ (75 aa)). The segment covering 149–159 (RSTDHVEKEAG) has biased composition (basic and acidic residues).

Belongs to the YRA1 family. In terms of assembly, associates with mRNPs.

It is found in the nucleus. In terms of biological role, involved in export of poly(A) mRNAs from the nucleus. Recruited to the coding sequences as well as poly-A sites of active genes. This Eremothecium gossypii (strain ATCC 10895 / CBS 109.51 / FGSC 9923 / NRRL Y-1056) (Yeast) protein is RNA annealing protein YRA2 (YRA2).